A 234-amino-acid chain; its full sequence is Nuclear transcription factor Y subunit B-6 (234 aa).

Disordered stretches follow at residues Met-1–Pro-21 and Met-35–Thr-55. A DNA-binding region spans residues Met-63–Ile-69. A subunit association domain (SAD) region spans residues Ile-90–Ile-101. Residues Asn-206–Tyr-234 form a disordered region. A compositionally biased stretch (low complexity) spans Ser-213–Ala-222.

Belongs to the NFYB/HAP3 subunit family. Heterotrimeric transcription factor composed of three components, NF-YA, NF-YB and NF-YC. NF-YB and NF-YC must interact and dimerize for NF-YA association and DNA binding. Interacts with PRN1. Binds directly with DPB3-1. As to expression, expressed in roots, flowers and developing siliques. Present in etiolated seedlings.

The protein resides in the nucleus. Functionally, component of the NF-Y/HAP transcription factor complex. The NF-Y complex stimulates the transcription of various genes by recognizing and binding to a CCAAT motif in promoters. Plays a role in the regulation of the embryogenesis. Involved in the abscisic acid (ABA) signaling pathway. The polypeptide is Nuclear transcription factor Y subunit B-6 (Arabidopsis thaliana (Mouse-ear cress)).